Consider the following 164-residue polypeptide: MTVEIANESGVDVDELRLLDLARYVLDRMRIHPLAELSILLVDEGEMAVLHERWMDEPGPTDVLSFPMDELRPGRLDVEIDPDAEPAVLGDVVLCPAVAKQQARHAGHSTQDELELLTVHGILHLLGYDHAEEDAEREMFALQSELLTAWRADRRIAGRPGRKR.

3 residues coordinate Zn(2+): H120, H124, and H130.

Belongs to the endoribonuclease YbeY family. Requires Zn(2+) as cofactor.

The protein localises to the cytoplasm. Its function is as follows. Single strand-specific metallo-endoribonuclease involved in late-stage 70S ribosome quality control and in maturation of the 3' terminus of the 16S rRNA. The sequence is that of Endoribonuclease YbeY from Acidothermus cellulolyticus (strain ATCC 43068 / DSM 8971 / 11B).